Reading from the N-terminus, the 225-residue chain is Thymidine kinase (225 aa).

ATP is bound at residue 15-22 (GSMFSGKT). The disordered stretch occupies residues 85 to 110 (KKQNHRTTTQCRSGDGTNNPGGVIPS). The span at 90–104 (RTTTQCRSGDGTNNP) shows a compositional bias: polar residues. 121 to 124 (DEAN) serves as a coordination point for ATP. E122 functions as the Proton acceptor in the catalytic mechanism. Zn(2+)-binding residues include C178, C181, C216, and C219.

This sequence belongs to the thymidine kinase family. As to quaternary structure, homotetramer.

It localises to the cytoplasm. The enzyme catalyses thymidine + ATP = dTMP + ADP + H(+). The polypeptide is Thymidine kinase (Haloquadratum walsbyi (strain DSM 16790 / HBSQ001)).